The sequence spans 228 residues: Elongation factor 1-beta 1 (228 aa).

N-acetylalanine is present on Ala2. Residues 14–65 (LKTLEEHLAGKTYISGDQLSVDDVKVYAAVLENPGDGFPNASKWYDSVASHL) enclose the GST C-terminal domain. The interval 75–139 (GVRVGGGVAP…DTKKTKESGK (65 aa)) is disordered. Positions 95 to 115 (PAADGDGDDDDDIDLFADETE) are enriched in acidic residues. Over residues 116 to 138 (DEKKAAEEREAAKKDTKKTKESG) the composition is skewed to basic and acidic residues.

This sequence belongs to the EF-1-beta/EF-1-delta family. EF-1 is composed of 4 subunits: alpha, beta (1B-alpha=beta'), delta (1B-beta), and gamma (1B-gamma).

The protein localises to the cell membrane. EF-1-beta and EF-1-delta stimulate the exchange of GDP bound to EF-1-alpha to GTP. The sequence is that of Elongation factor 1-beta 1 from Arabidopsis thaliana (Mouse-ear cress).